A 391-amino-acid chain; its full sequence is CBS domain-containing protein CBSX5 (391 aa).

2 CBS domains span residues 16 to 81 (GKPP…DHDH) and 331 to 391 (MARK…ENDM).

The chain is CBS domain-containing protein CBSX5 (CBSX5) from Arabidopsis thaliana (Mouse-ear cress).